The primary structure comprises 224 residues: Deoxyribose-phosphate aldolase (224 aa).

Aspartate 92 functions as the Proton donor/acceptor in the catalytic mechanism. The Schiff-base intermediate with acetaldehyde role is filled by lysine 154. Lysine 183 functions as the Proton donor/acceptor in the catalytic mechanism.

It belongs to the DeoC/FbaB aldolase family. DeoC type 1 subfamily.

It is found in the cytoplasm. The enzyme catalyses 2-deoxy-D-ribose 5-phosphate = D-glyceraldehyde 3-phosphate + acetaldehyde. The protein operates within carbohydrate degradation; 2-deoxy-D-ribose 1-phosphate degradation; D-glyceraldehyde 3-phosphate and acetaldehyde from 2-deoxy-alpha-D-ribose 1-phosphate: step 2/2. Functionally, catalyzes a reversible aldol reaction between acetaldehyde and D-glyceraldehyde 3-phosphate to generate 2-deoxy-D-ribose 5-phosphate. The chain is Deoxyribose-phosphate aldolase from Histophilus somni (strain 129Pt) (Haemophilus somnus).